A 318-amino-acid chain; its full sequence is Forkhead box protein I2 (318 aa).

Residues 1–30 (MATYCDDLGPSSAPPGQAQATAHPPGYEPG) are disordered. A DNA-binding region (fork-head) is located at residues 102–196 (RPPYSYSALI…DNGNFRRKRK (95 aa)).

It localises to the nucleus. Its function is as follows. Possible transcriptional activator. The polypeptide is Forkhead box protein I2 (FOXI2) (Homo sapiens (Human)).